We begin with the raw amino-acid sequence, 532 residues long: Neutral amino acid transporter A (532 aa).

At methionine 1 the chain carries N-acetylmethionine. The tract at residues methionine 1–methionine 29 is disordered. Residues methionine 1–arginine 41 are Cytoplasmic-facing. The next 3 helical transmembrane spans lie at histidine 42–leucine 62, methionine 88–serine 108, and alanine 119–isoleucine 139. At lysine 140–threonine 216 the chain is on the extracellular side. N-linked (GlcNAc...) asparagine glycans are attached at residues asparagine 201 and asparagine 206. 6 consecutive transmembrane segments (helical) span residues aspartate 217–leucine 237, alanine 257–isoleucine 277, isoleucine 298–phenylalanine 318, phenylalanine 328–threonine 348, isoleucine 373–isoleucine 393, and valine 418–isoleucine 438. The disordered stretch occupies residues glutamate 495–leucine 532. Serine 507, serine 527, and serine 530 each carry phosphoserine.

This sequence belongs to the dicarboxylate/amino acid:cation symporter (DAACS) (TC 2.A.23) family. SLC1A4 subfamily.

The protein localises to the membrane. It is found in the melanosome. The catalysed reaction is L-threonine(in) + Na(+)(in) = L-threonine(out) + Na(+)(out). It carries out the reaction L-serine(in) + Na(+)(in) = L-serine(out) + Na(+)(out). It catalyses the reaction L-cysteine(in) + Na(+)(in) = L-cysteine(out) + Na(+)(out). The enzyme catalyses L-alanine(in) + Na(+)(in) = L-alanine(out) + Na(+)(out). The catalysed reaction is L-proline(in) + Na(+)(in) = L-proline(out) + Na(+)(out). It carries out the reaction 4-hydroxy-L-proline(in) + Na(+)(in) = 4-hydroxy-L-proline(out) + Na(+)(out). Functionally, sodium-dependent neutral amino-acid transporter that mediates transport of alanine, serine, cysteine, proline, hydroxyproline and threonine. In Mus musculus (Mouse), this protein is Neutral amino acid transporter A (Slc1a4).